A 457-amino-acid chain; its full sequence is 3-ketoacyl-CoA thiolase 5, peroxisomal (457 aa).

Residues 1 to 37 constitute a peroxisome transit peptide; it reads MERAMERQKILLRHLNPVSSSNSSLKHEPSLLSPVNC. Cys137 (acyl-thioester intermediate) is an active-site residue. Catalysis depends on proton acceptor residues His394 and Cys426.

It belongs to the thiolase-like superfamily. Thiolase family. Homodimer. Expressed in seedlings and wounded leaves.

Its subcellular location is the peroxisome. It carries out the reaction an acyl-CoA + acetyl-CoA = a 3-oxoacyl-CoA + CoA. Its pathway is lipid metabolism; fatty acid metabolism. Its function is as follows. Probably involved in long chain fatty-acid beta-oxidation prior to gluconeogenesis during germination and subsequent seedling growth. Involved in systemic jasmonic acid (JA) biosynthesis after wounding and may be during senescence. The polypeptide is 3-ketoacyl-CoA thiolase 5, peroxisomal (KAT5) (Arabidopsis thaliana (Mouse-ear cress)).